The sequence spans 644 residues: Forkhead box protein O (644 aa).

A disordered region spans residues 39–75 (FEPQTRARSNTWPCPRPENFVEPPDELDSTKASNQQL). A Phosphothreonine; by PKB/AKT1 modification is found at Thr-49. Ser-80 carries the post-translational modification Phosphoserine. Residues 100–206 (WGNLSYADLI…ETSRYEKRRG (107 aa)) constitute a DNA-binding region (fork-head). Disordered regions lie at residues 187-210 (KSVRRRAASMETSRYEKRRGRAKK), 222-276 (GLND…SPIR), 329-386 (QQQQ…QTLQ), 412-435 (SPNSVTTTMSPAYPNSEPSSDSLN), and 578-612 (QQHLQQQQQHHQHQQQLLLNNNNNNNNNNSSNSSL). Ser-195 is subject to Phosphoserine; by PKB/AKT1. 2 stretches are compositionally biased toward polar residues: residues 226–235 (ATPSPSSSVS) and 261–270 (RASSNASSCG). Ser-264 carries the phosphoserine; by PKB/AKT1 modification. Phosphoserine is present on residues Ser-267, Ser-268, and Ser-273. The segment covering 329-340 (QQQQQQQQQQQQ) has biased composition (low complexity). Pro residues predominate over residues 350–359 (SQPPPPPYQP). Low complexity predominate over residues 360 to 374 (PQLQQQQQQQPSYSL). The segment covering 412 to 421 (SPNSVTTTMS) has biased composition (polar residues).

Interacts with melt.

It localises to the cytoplasm. Its subcellular location is the nucleus. In terms of biological role, transcription factor involved in the regulation of the insulin signaling pathway. Consistently activates both the downstream target Thor\d4EBP and the feedback control target InR. Involved in negative regulation of the cell cycle, modulating cell growth and proliferation. In response to cellular stresses, such as nutrient deprivation or increased levels of reactive oxygen species, foxo is activated and inhibits growth through the action of target genes such as Thor. Foxo activated in the adult fat body can regulate lifespan in adults; an insulin peptide itself may function as one secondary messenger of insulin-regulated aging. Also regulates Lip4, homolog of human acid lipases, thereby acting as a key modulator of lipid metabolism by insulin signaling and integrates insulin responses to glucose and lipid homeostasis. The sequence is that of Forkhead box protein O from Drosophila pseudoobscura pseudoobscura (Fruit fly).